The chain runs to 306 residues: Aspartate carbamoyltransferase catalytic subunit (306 aa).

Positions 56 and 57 each coordinate carbamoyl phosphate. Lysine 84 lines the L-aspartate pocket. Residues arginine 106, histidine 134, and glutamine 137 each coordinate carbamoyl phosphate. Arginine 167 and arginine 221 together coordinate L-aspartate. Carbamoyl phosphate contacts are provided by glycine 262 and proline 263.

Belongs to the aspartate/ornithine carbamoyltransferase superfamily. ATCase family. In terms of assembly, heterododecamer (2C3:3R2) of six catalytic PyrB chains organized as two trimers (C3), and six regulatory PyrI chains organized as three dimers (R2).

The catalysed reaction is carbamoyl phosphate + L-aspartate = N-carbamoyl-L-aspartate + phosphate + H(+). It participates in pyrimidine metabolism; UMP biosynthesis via de novo pathway; (S)-dihydroorotate from bicarbonate: step 2/3. Catalyzes the condensation of carbamoyl phosphate and aspartate to form carbamoyl aspartate and inorganic phosphate, the committed step in the de novo pyrimidine nucleotide biosynthesis pathway. This Desulforudis audaxviator (strain MP104C) protein is Aspartate carbamoyltransferase catalytic subunit.